The primary structure comprises 167 residues: Peptide deformylase (167 aa).

Fe cation-binding residues include C90 and H132. The active site involves E133. Fe cation is bound at residue H136.

Belongs to the polypeptide deformylase family. Fe(2+) is required as a cofactor.

The catalysed reaction is N-terminal N-formyl-L-methionyl-[peptide] + H2O = N-terminal L-methionyl-[peptide] + formate. Functionally, removes the formyl group from the N-terminal Met of newly synthesized proteins. Requires at least a dipeptide for an efficient rate of reaction. N-terminal L-methionine is a prerequisite for activity but the enzyme has broad specificity at other positions. The polypeptide is Peptide deformylase (Dehalococcoides mccartyi (strain CBDB1)).